Consider the following 371-residue polypeptide: Chaperone protein DnaJ (371 aa).

In terms of domain architecture, J spans 5 to 69; it reads DYYEILGIAK…QKRAAYDQHG (65 aa). The CR-type zinc finger occupies 127–205; sequence GASKEIHITT…CRGQGKVEEP (79 aa). Residues Cys140, Cys143, Cys157, Cys160, Cys179, Cys182, Cys193, and Cys196 each contribute to the Zn(2+) site. CXXCXGXG motif repeat units follow at residues 140 to 147, 157 to 164, 179 to 186, and 193 to 200; these read CEHCKGSG, CTTCRGVG, CPRCHGQG, and CRQCRGQG.

The protein belongs to the DnaJ family. Homodimer. Requires Zn(2+) as cofactor.

The protein resides in the cytoplasm. In terms of biological role, participates actively in the response to hyperosmotic and heat shock by preventing the aggregation of stress-denatured proteins and by disaggregating proteins, also in an autonomous, DnaK-independent fashion. Unfolded proteins bind initially to DnaJ; upon interaction with the DnaJ-bound protein, DnaK hydrolyzes its bound ATP, resulting in the formation of a stable complex. GrpE releases ADP from DnaK; ATP binding to DnaK triggers the release of the substrate protein, thus completing the reaction cycle. Several rounds of ATP-dependent interactions between DnaJ, DnaK and GrpE are required for fully efficient folding. Also involved, together with DnaK and GrpE, in the DNA replication of plasmids through activation of initiation proteins. The protein is Chaperone protein DnaJ of Hamiltonella defensa subsp. Acyrthosiphon pisum (strain 5AT).